Reading from the N-terminus, the 382-residue chain is Alkanesulfonate monooxygenase (382 aa).

This sequence belongs to the SsuD family.

It catalyses the reaction an alkanesulfonate + FMNH2 + O2 = an aldehyde + FMN + sulfite + H2O + 2 H(+). Its function is as follows. Catalyzes the desulfonation of aliphatic sulfonates. The polypeptide is Alkanesulfonate monooxygenase (Ectopseudomonas mendocina (strain ymp) (Pseudomonas mendocina)).